A 212-amino-acid chain; its full sequence is Negative modulator of initiation of replication (212 aa).

Interaction with DNA regions lie at residues 113–114 and 144–148; these read AV and RTRVY.

It belongs to the SeqA family. As to quaternary structure, homodimer. Polymerizes to form helical filaments.

Its subcellular location is the cytoplasm. Functionally, negative regulator of replication initiation, which contributes to regulation of DNA replication and ensures that replication initiation occurs exactly once per chromosome per cell cycle. Binds to pairs of hemimethylated GATC sequences in the oriC region, thus preventing assembly of replication proteins and re-initiation at newly replicated origins. Repression is relieved when the region becomes fully methylated. In Actinobacillus succinogenes (strain ATCC 55618 / DSM 22257 / CCUG 43843 / 130Z), this protein is Negative modulator of initiation of replication.